A 377-amino-acid polypeptide reads, in one-letter code: Dihydroorotase, mitochondrial (377 aa).

Zn(2+) contacts are provided by histidine 44, histidine 46, lysine 130, histidine 168, and histidine 206. Lysine 130 is subject to N6-carboxylysine. Residue serine 223 is modified to Phosphoserine. Aspartate 280 provides a ligand contact to Zn(2+).

Belongs to the metallo-dependent hydrolases superfamily. DHOase family. Class II DHOase subfamily. It depends on Zn(2+) as a cofactor.

It localises to the mitochondrion. The enzyme catalyses (S)-dihydroorotate + H2O = N-carbamoyl-L-aspartate + H(+). Its pathway is pyrimidine metabolism; UMP biosynthesis via de novo pathway; (S)-dihydroorotate from bicarbonate: step 3/3. This chain is Dihydroorotase, mitochondrial (PYR4), found in Arabidopsis thaliana (Mouse-ear cress).